Consider the following 414-residue polypeptide: Particulate methane monooxygenase alpha subunit (414 aa).

The N-terminal stretch at 1-32 is a signal peptide; the sequence is MKTIKDRIAKWSAIGLLSAVAATAFYAPSASA. Cu cation contacts are provided by His33, His48, His72, His137, and His139. Residues 33–172 are cupredoxin domain used to construct soluble pmoB (spmoB); it reads HGEKSQAAFM…MSEFRNPVTT (140 aa). 2 consecutive transmembrane segments (helical) span residues 186–206 and 235–255; these read GNTY…IGYW and VAMG…SSAN. The tract at residues 265-414 is cupredoxin domain used to construct soluble pmoB (spmoB); the sequence is QAGTMRGMKP…IDAPLIPSFM (150 aa).

M.capsulatus has two forms of methane monooxygenase, a soluble (sMMO) and a membrane-bound (particulate) type (pMMO). The particulate type is a nonamer composed of three alpha:beta:gamma heterotrimeric protomers assembled into a cylindrical structure; the beta and gamma subunits comprise the bulk of the membrane-spanning regions and the soluble regions are derived primarily from alpha subunits which form two antiparallel beta-barrel-like structures each. This assembly, also called pMMO hydroxylase (pMMO-H), is proposed to associate with methanol dehydrogenase (MDH), also designated as pMMO-R, to form the pMMO-C complex which seems to have greater methane monooxygenase activity. Cu(2+) serves as cofactor.

It localises to the membrane. The catalysed reaction is methane + a quinol + O2 = methanol + a quinone + H2O. In terms of biological role, methane monooxygenase is responsible for the initial oxygenation of methane to methanol in methanotrophs. At least in vitro, specific quinols can replace NADH as reductants. This Methylococcus capsulatus (strain ATCC 33009 / NCIMB 11132 / Bath) protein is Particulate methane monooxygenase alpha subunit (pmoB1).